A 341-amino-acid polypeptide reads, in one-letter code: Ribosomal RNA small subunit methyltransferase H (341 aa).

Residues 47 to 49 (GGY), Asp64, Phe91, Asp109, and Gln116 contribute to the S-adenosyl-L-methionine site.

This sequence belongs to the methyltransferase superfamily. RsmH family.

The protein localises to the cytoplasm. The enzyme catalyses cytidine(1402) in 16S rRNA + S-adenosyl-L-methionine = N(4)-methylcytidine(1402) in 16S rRNA + S-adenosyl-L-homocysteine + H(+). In terms of biological role, specifically methylates the N4 position of cytidine in position 1402 (C1402) of 16S rRNA. The chain is Ribosomal RNA small subunit methyltransferase H from Agrobacterium fabrum (strain C58 / ATCC 33970) (Agrobacterium tumefaciens (strain C58)).